The primary structure comprises 374 residues: Putative C-&gt;U-editing enzyme APOBEC-4 (374 aa).

A CMP/dCMP-type deaminase domain is found at 60–176; sequence PQTKHLTFYE…AWNRKALQSL (117 aa). His92 serves as a coordination point for Zn(2+). Glu94 acts as the Proton donor in catalysis. Cys126 and Cys133 together coordinate Zn(2+). A disordered region spans residues 259-280; sequence EKHPLGSAAPAQRQPTRGQDPR.

The protein belongs to the cytidine and deoxycytidylate deaminase family. The cofactor is Zn(2+). Predominantly expressed in testis.

Functionally, putative C to U editing enzyme whose physiological substrate is not yet known. This Mus musculus (Mouse) protein is Putative C-&gt;U-editing enzyme APOBEC-4 (Apobec4).